The following is a 202-amino-acid chain: LexA repressor (202 aa).

The segment at residues 28–48 (RAEIAQRLGFRSPNAAEEHLK) is a DNA-binding region (H-T-H motif). Residues serine 119 and lysine 156 each act as for autocatalytic cleavage activity in the active site.

Belongs to the peptidase S24 family. As to quaternary structure, homodimer.

It carries out the reaction Hydrolysis of Ala-|-Gly bond in repressor LexA.. Functionally, represses a number of genes involved in the response to DNA damage (SOS response), including recA and lexA. Binds to the 16 bp palindromic sequence 5'-CTGTATATATATACAG-3'. In the presence of single-stranded DNA, RecA interacts with LexA causing an autocatalytic cleavage which disrupts the DNA-binding part of LexA, leading to derepression of the SOS regulon and eventually DNA repair. The protein is LexA repressor of Yersinia pseudotuberculosis serotype O:1b (strain IP 31758).